We begin with the raw amino-acid sequence, 552 residues long: CTP synthase (552 aa).

The interval M1–L265 is amidoligase domain. Position 13 (S13) interacts with CTP. S13 contributes to the UTP binding site. ATP-binding positions include S14–I19 and D71. Mg(2+)-binding residues include D71 and E139. CTP is bound by residues D146–E148, K186–Q191, and K222. Residues K186 to Q191 and K222 contribute to the UTP site. Residues T290–A545 enclose the Glutamine amidotransferase type-1 domain. Residue G351 coordinates L-glutamine. Residue C378 is the Nucleophile; for glutamine hydrolysis of the active site. L-glutamine-binding positions include L379–Q382, E402, and R468. Residues H518 and E520 contribute to the active site.

Belongs to the CTP synthase family. Homotetramer.

It catalyses the reaction UTP + L-glutamine + ATP + H2O = CTP + L-glutamate + ADP + phosphate + 2 H(+). The enzyme catalyses L-glutamine + H2O = L-glutamate + NH4(+). The catalysed reaction is UTP + NH4(+) + ATP = CTP + ADP + phosphate + 2 H(+). Its pathway is pyrimidine metabolism; CTP biosynthesis via de novo pathway; CTP from UDP: step 2/2. Allosterically activated by GTP, when glutamine is the substrate; GTP has no effect on the reaction when ammonia is the substrate. The allosteric effector GTP functions by stabilizing the protein conformation that binds the tetrahedral intermediate(s) formed during glutamine hydrolysis. Inhibited by the product CTP, via allosteric rather than competitive inhibition. Catalyzes the ATP-dependent amination of UTP to CTP with either L-glutamine or ammonia as the source of nitrogen. Regulates intracellular CTP levels through interactions with the four ribonucleotide triphosphates. The chain is CTP synthase from Herminiimonas arsenicoxydans.